Here is a 432-residue protein sequence, read N- to C-terminus: Ribosomal protein uS12 methylthiotransferase RimO (432 aa).

The region spanning 4 to 122 (KTIDIITLGC…LLQDLGKAYH (119 aa)) is the MTTase N-terminal domain. The [4Fe-4S] cluster site is built by C13, C51, C85, C146, C150, and C153. The Radical SAM core domain maps to 132–363 (TTPKHYAYLK…MAIQQGISTE (232 aa)). The TRAM domain occupies 366 to 432 (ASKVGQKMKV…DEFDLFGEII (67 aa)).

It belongs to the methylthiotransferase family. RimO subfamily. Requires [4Fe-4S] cluster as cofactor.

The protein localises to the cytoplasm. It catalyses the reaction L-aspartate(89)-[ribosomal protein uS12]-hydrogen + (sulfur carrier)-SH + AH2 + 2 S-adenosyl-L-methionine = 3-methylsulfanyl-L-aspartate(89)-[ribosomal protein uS12]-hydrogen + (sulfur carrier)-H + 5'-deoxyadenosine + L-methionine + A + S-adenosyl-L-homocysteine + 2 H(+). Its function is as follows. Catalyzes the methylthiolation of an aspartic acid residue of ribosomal protein uS12. The protein is Ribosomal protein uS12 methylthiotransferase RimO of Bacteroides fragilis (strain ATCC 25285 / DSM 2151 / CCUG 4856 / JCM 11019 / LMG 10263 / NCTC 9343 / Onslow / VPI 2553 / EN-2).